A 177-amino-acid chain; its full sequence is MEKDPLTIIEQAEDHFIERIAENMHAFGMPSTVGRVLGIIYMNRKPMTLTELSEATGMSKTRMSQVVREMLDANIAEKVFEKGVRKDLYEVEQDYYQTFITLFSATWSKVVSKNKMMHKKLNRELLSVLDEELTPEAEEKVNELLKELKEWLDYYNWLSRLIEFFESEDIFKYVPKP.

The H-T-H motif DNA-binding region spans 49–73 (LTELSEATGMSKTRMSQVVREMLDA).

It belongs to the GbsR family.

The protein is Putative HTH-type transcriptional regulator YvaV (yvaV) of Bacillus subtilis (strain 168).